The sequence spans 511 residues: GMP synthase [glutamine-hydrolyzing] (511 aa).

Residues 5-195 (DILVLDFGSQ…AKYACNCESV (191 aa)) form the Glutamine amidotransferase type-1 domain. The active-site Nucleophile is cysteine 82. Active-site residues include histidine 169 and glutamate 171. One can recognise a GMPS ATP-PPase domain in the interval 196-386 (WNMGSFAKTQ…LGLSKEVVYR (191 aa)). An ATP-binding site is contributed by 223–229 (SGGVDSS).

In terms of assembly, homodimer.

It catalyses the reaction XMP + L-glutamine + ATP + H2O = GMP + L-glutamate + AMP + diphosphate + 2 H(+). It functions in the pathway purine metabolism; GMP biosynthesis; GMP from XMP (L-Gln route): step 1/1. Its function is as follows. Catalyzes the synthesis of GMP from XMP. The polypeptide is GMP synthase [glutamine-hydrolyzing] (Campylobacter jejuni (strain RM1221)).